Here is a 378-residue protein sequence, read N- to C-terminus: Chaperone protein DnaJ (378 aa).

A J domain is found at 5–70 (DFYEILGVSK…EKRSAYDRMG (66 aa)). The CR-type zinc finger occupies 137–215 (GCKKEISFTA…CHGNGVKDKS (79 aa)). Residues Cys-150, Cys-153, Cys-167, Cys-170, Cys-189, Cys-192, Cys-203, and Cys-206 each coordinate Zn(2+). CXXCXGXG motif repeat units follow at residues 150–157 (CDTCDGKG), 167–174 (CQTCHGQG), 189–196 (CPHCGGTG), and 203–210 (CSDCHGNG).

The protein belongs to the DnaJ family. Homodimer. It depends on Zn(2+) as a cofactor.

It localises to the cytoplasm. Participates actively in the response to hyperosmotic and heat shock by preventing the aggregation of stress-denatured proteins and by disaggregating proteins, also in an autonomous, DnaK-independent fashion. Unfolded proteins bind initially to DnaJ; upon interaction with the DnaJ-bound protein, DnaK hydrolyzes its bound ATP, resulting in the formation of a stable complex. GrpE releases ADP from DnaK; ATP binding to DnaK triggers the release of the substrate protein, thus completing the reaction cycle. Several rounds of ATP-dependent interactions between DnaJ, DnaK and GrpE are required for fully efficient folding. Also involved, together with DnaK and GrpE, in the DNA replication of plasmids through activation of initiation proteins. This Psychrobacter cryohalolentis (strain ATCC BAA-1226 / DSM 17306 / VKM B-2378 / K5) protein is Chaperone protein DnaJ.